Reading from the N-terminus, the 397-residue chain is Elongation factor Tu (397 aa).

The 198-residue stretch at 10–207 folds into the tr-type G domain; the sequence is KPHVNVGTIG…TLDAYIPEPE (198 aa). Residues 19-26 are G1; that stretch reads GHVDHGKT. 19 to 26 contacts GTP; that stretch reads GHVDHGKT. T26 serves as a coordination point for Mg(2+). The segment at 60-64 is G2; the sequence is GITIA. The segment at 81–84 is G3; that stretch reads DCPG. Residues 81–85 and 136–139 each bind GTP; these read DCPGH and NKAD. A G4 region spans residues 136 to 139; it reads NKAD. A G5 region spans residues 174 to 176; sequence SAL.

The protein belongs to the TRAFAC class translation factor GTPase superfamily. Classic translation factor GTPase family. EF-Tu/EF-1A subfamily. As to quaternary structure, monomer.

The protein localises to the cytoplasm. It catalyses the reaction GTP + H2O = GDP + phosphate + H(+). GTP hydrolase that promotes the GTP-dependent binding of aminoacyl-tRNA to the A-site of ribosomes during protein biosynthesis. The protein is Elongation factor Tu of Hahella chejuensis (strain KCTC 2396).